Here is a 323-residue protein sequence, read N- to C-terminus: Formyl peptide receptor-related sequence 4 (323 aa).

Over Met1–Ser29 the chain is Extracellular. N-linked (GlcNAc...) asparagine glycans are attached at residues Asn4 and Asn10. Residues Leu30–Val50 form a helical membrane-spanning segment. At Ala51–Asn66 the chain is on the cytoplasmic side. A helical transmembrane segment spans residues Leu67 to Met87. Over Arg88–Lys99 the chain is Extracellular. Residues Cys98 and Cys176 are joined by a disulfide bond. The chain crosses the membrane as a helical span at residues Leu100–Ala120. Over Met121–Lys144 the chain is Cytoplasmic. Residues Val145–Thr165 form a helical membrane-spanning segment. Residues Thr166–Gly202 lie on the Extracellular side of the membrane. A helical transmembrane segment spans residues Ile203–Leu223. At Met224–Arg241 the chain is on the cytoplasmic side. A helical membrane pass occupies residues Val242 to Leu262. Over Leu263 to Asn280 the chain is Extracellular. Asn269 carries an N-linked (GlcNAc...) asparagine glycan. The chain crosses the membrane as a helical span at residues Pro281–Gly301. The Cytoplasmic segment spans residues Gln302–Asp323.

Belongs to the G-protein coupled receptor 1 family. Expressed in 0.6 % of a subset of sensory neurons located in the apical layer of the vomeronasal organ. Each neuron appears to express only one receptor gene.

Its subcellular location is the cell membrane. May have an olfactory function associated with the identification of pathogens or of pathogenic states. This chain is Formyl peptide receptor-related sequence 4 (Fpr-rs4), found in Mus musculus (Mouse).